The chain runs to 588 residues: Synaptotagmin-3 (588 aa).

Topologically, residues M1–V54 are vesicular. The tract at residues C10–Q34 is cysteine motif. Residues S55 to V75 traverse the membrane as a helical segment. Over S76–E588 the chain is Cytoplasmic. Disordered regions lie at residues G129–S161, P183–L222, and Q238–L257. The segment covering P183–P205 has biased composition (low complexity). Polar residues predominate over residues A213 to L222. R286 carries the omega-N-methylarginine modification. 2 C2 domains span residues P297 to R418 and D429 to H563. Ca(2+) is bound by residues D328, D334, D386, F387, D388, S391, D394, D460, D466, D520, and D522.

It belongs to the synaptotagmin family. As to quaternary structure, homodimer; disulfide-linked via the cysteine motif. Can also form heterodimers with SYT6, SYT9 and SYT10. Ca(2+) is required as a cofactor. As to expression, brain, various endocrine tissues and hormone-secreting clonal cells.

It is found in the cell membrane. It localises to the cytoplasmic vesicle. Its subcellular location is the secretory vesicle membrane. Ca(2+) sensor involved in Ca(2+)-dependent exocytosis of secretory vesicles through Ca(2+) and phospholipid binding to the C2 domain. Ca(2+) induces binding of the C2-domains to phospholipid membranes and to assembled SNARE-complexes; both actions contribute to triggering exocytosis. Plays a role in dendrite formation by melanocytes. The protein is Synaptotagmin-3 (Syt3) of Rattus norvegicus (Rat).